A 280-amino-acid polypeptide reads, in one-letter code: ATP synthase gamma chain (280 aa).

This sequence belongs to the ATPase gamma chain family. As to quaternary structure, F-type ATPases have 2 components, CF(1) - the catalytic core - and CF(0) - the membrane proton channel. CF(1) has five subunits: alpha(3), beta(3), gamma(1), delta(1), epsilon(1). CF(0) has three main subunits: a, b and c.

It localises to the cell membrane. Its function is as follows. Produces ATP from ADP in the presence of a proton gradient across the membrane. The gamma chain is believed to be important in regulating ATPase activity and the flow of protons through the CF(0) complex. The protein is ATP synthase gamma chain of Mycoplasma capricolum subsp. capricolum (strain California kid / ATCC 27343 / NCTC 10154).